The chain runs to 213 residues: Thymidylate kinase (213 aa).

Residue 10-17 participates in ATP binding; it reads GLEGAGKT.

The protein belongs to the thymidylate kinase family.

It catalyses the reaction dTMP + ATP = dTDP + ADP. In terms of biological role, phosphorylation of dTMP to form dTDP in both de novo and salvage pathways of dTTP synthesis. This is Thymidylate kinase from Escherichia coli O7:K1 (strain IAI39 / ExPEC).